Here is a 112-residue protein sequence, read N- to C-terminus: Putative pterin-4-alpha-carbinolamine dehydratase (112 aa).

It belongs to the pterin-4-alpha-carbinolamine dehydratase family.

It catalyses the reaction (4aS,6R)-4a-hydroxy-L-erythro-5,6,7,8-tetrahydrobiopterin = (6R)-L-erythro-6,7-dihydrobiopterin + H2O. The protein is Putative pterin-4-alpha-carbinolamine dehydratase of Vibrio campbellii (strain ATCC BAA-1116).